Reading from the N-terminus, the 313-residue chain is Ribosomal RNA small subunit methyltransferase H (313 aa).

S-adenosyl-L-methionine is bound by residues 33-35 (AGH), D53, F82, D103, and Q110.

It belongs to the methyltransferase superfamily. RsmH family.

Its subcellular location is the cytoplasm. The enzyme catalyses cytidine(1402) in 16S rRNA + S-adenosyl-L-methionine = N(4)-methylcytidine(1402) in 16S rRNA + S-adenosyl-L-homocysteine + H(+). Its function is as follows. Specifically methylates the N4 position of cytidine in position 1402 (C1402) of 16S rRNA. This is Ribosomal RNA small subunit methyltransferase H from Ruminiclostridium cellulolyticum (strain ATCC 35319 / DSM 5812 / JCM 6584 / H10) (Clostridium cellulolyticum).